The chain runs to 374 residues: Alcohol dehydrogenase 3, mitochondrial (374 aa).

The N-terminal 26 residues, 1 to 26, are a transit peptide targeting the mitochondrion; sequence MLRLTSARSIVSPLRKGAFGSIRTLA. Residues C70, H93, C124, C127, C130, C138, and C180 each coordinate Zn(2+). NAD(+)-binding positions include 204-210, D228, K233, 295-297, and R367; these read GAAGGLG and VGL.

This sequence belongs to the zinc-containing alcohol dehydrogenase family. Homotetramer. Requires Zn(2+) as cofactor.

It is found in the mitochondrion matrix. It carries out the reaction a primary alcohol + NAD(+) = an aldehyde + NADH + H(+). The enzyme catalyses a secondary alcohol + NAD(+) = a ketone + NADH + H(+). The chain is Alcohol dehydrogenase 3, mitochondrial (ADH3) from Kluyveromyces lactis (strain ATCC 8585 / CBS 2359 / DSM 70799 / NBRC 1267 / NRRL Y-1140 / WM37) (Yeast).